The primary structure comprises 158 residues: Small ribosomal subunit protein uS7 (158 aa).

The protein belongs to the universal ribosomal protein uS7 family. As to quaternary structure, part of the 30S ribosomal subunit. Contacts proteins S9 and S11.

One of the primary rRNA binding proteins, it binds directly to 16S rRNA where it nucleates assembly of the head domain of the 30S subunit. Is located at the subunit interface close to the decoding center, probably blocks exit of the E-site tRNA. The polypeptide is Small ribosomal subunit protein uS7 (Porphyromonas gingivalis (strain ATCC 33277 / DSM 20709 / CIP 103683 / JCM 12257 / NCTC 11834 / 2561)).